The following is a 157-amino-acid chain: SsrA-binding protein (157 aa).

The segment at 131 to 157 (KQLHDKRDTEKKRDWSREKGRIMRARG) is disordered. The segment covering 132-151 (QLHDKRDTEKKRDWSREKGR) has biased composition (basic and acidic residues).

It belongs to the SmpB family.

Its subcellular location is the cytoplasm. In terms of biological role, required for rescue of stalled ribosomes mediated by trans-translation. Binds to transfer-messenger RNA (tmRNA), required for stable association of tmRNA with ribosomes. tmRNA and SmpB together mimic tRNA shape, replacing the anticodon stem-loop with SmpB. tmRNA is encoded by the ssrA gene; the 2 termini fold to resemble tRNA(Ala) and it encodes a 'tag peptide', a short internal open reading frame. During trans-translation Ala-aminoacylated tmRNA acts like a tRNA, entering the A-site of stalled ribosomes, displacing the stalled mRNA. The ribosome then switches to translate the ORF on the tmRNA; the nascent peptide is terminated with the 'tag peptide' encoded by the tmRNA and targeted for degradation. The ribosome is freed to recommence translation, which seems to be the essential function of trans-translation. The chain is SsrA-binding protein from Rhodopseudomonas palustris (strain BisB18).